A 488-amino-acid polypeptide reads, in one-letter code: Microtubule-destabilizing protein 60 (488 aa).

Residues 25–56 (AQEVSRFSENSNPNFVSHSTPLEKSSKSSAQK) are compositionally biased toward polar residues. Disordered stretches follow at residues 25–71 (AQEV…VFSP), 262–304 (HASV…TKKQ), and 436–457 (DRPFIPKRSNKHPTVPRDPKFN). Residues 264–280 (SVSSSWDNSVSSLNSNG) show a composition bias toward low complexity.

This sequence belongs to the TPX2 family.

Its subcellular location is the cytoplasm. It localises to the cytoskeleton. Binds directly to microtubules. Microtubule-destabilizing protein involved in the PIF3-dependent positive regulation of hypocotyl cell elongation via the modulation of cortical microtubules dynamic in response to light and ethylene signaling. Promotes submergence-induced and ethylene-dependent underwater hypocotyl elongation. The chain is Microtubule-destabilizing protein 60 from Arabidopsis thaliana (Mouse-ear cress).